A 216-amino-acid polypeptide reads, in one-letter code: Uracil phosphoribosyltransferase (216 aa).

Residues arginine 85, arginine 110, and 136 to 144 contribute to the 5-phospho-alpha-D-ribose 1-diphosphate site; that span reads DPMLATGNS. Residues isoleucine 201 and 206-208 each bind uracil; that span reads GDA. Aspartate 207 is a 5-phospho-alpha-D-ribose 1-diphosphate binding site.

Belongs to the UPRTase family. Requires Mg(2+) as cofactor.

It carries out the reaction UMP + diphosphate = 5-phospho-alpha-D-ribose 1-diphosphate + uracil. It participates in pyrimidine metabolism; UMP biosynthesis via salvage pathway; UMP from uracil: step 1/1. With respect to regulation, allosterically activated by GTP. Its function is as follows. Catalyzes the conversion of uracil and 5-phospho-alpha-D-ribose 1-diphosphate (PRPP) to UMP and diphosphate. This Rhodospirillum centenum (strain ATCC 51521 / SW) protein is Uracil phosphoribosyltransferase.